The primary structure comprises 1207 residues: DNA-directed RNA polymerase, mitochondrial (1207 aa).

The N-terminal 41 residues, 1–41 (MSALRWTRSAAGLGRVLRSPGPHRPPSEEGTFGGFCSSRRS), are a transit peptide targeting the mitochondrion. Disordered regions lie at residues 1-48 (MSAL…SPRE) and 82-103 (KKVQ…KLEA). 2 PPR repeats span residues 232–266 (TLHM…GLSP) and 267–302 (DLCS…GFQP). The tract at residues 702 to 724 (VPPPRSEAPRPARYQLPPGSTPV) is disordered. Positions 773-1207 (FRGRTYPCPP…QVIRSTYFFS (435 aa)) are mediates interaction with TEFM. Catalysis depends on residues Asp893, Lys962, and Asp1121.

Belongs to the phage and mitochondrial RNA polymerase family. In terms of assembly, homodimer. Component of the mitochondrial transcription initiation complex, composed at least of TFB2M, TFAM and POLRMT. In this complex TFAM recruits POLRMT to the promoter whereas TFB2M induces structural changes in POLRMT to enable promoter opening and trapping of the DNA non-template strand. Upon metabolic stress, forms a complex composed of FOXO3, SIRT3 and mitochondrial RNA polymerase POLRMT; the complex is recruited to mtDNA in a SIRT3-dependent manner. Also forms a complex composed of FOXO3, SIRT3, TFAM and POLRMT. Interacts with TFB1M and TFB2M, leading to the stimulation of transcription. Interacts with TEFM. Interacts with MTRES1.

It localises to the mitochondrion. It carries out the reaction RNA(n) + a ribonucleoside 5'-triphosphate = RNA(n+1) + diphosphate. Its function is as follows. DNA-dependent RNA polymerase catalyzes the transcription of mitochondrial DNA into RNA using the four ribonucleoside triphosphates as substrates. Component of the mitochondrial transcription initiation complex, composed at least of TFB2M, TFAM and POLRMT that is required for basal transcription of mitochondrial DNA. In this complex, TFAM recruits POLRMT to a specific promoter whereas TFB2M induces structural changes in POLRMT to enable promoter opening and trapping of the DNA non-template strand. Has DNA primase activity. Catalyzes the synthesis of short RNA primers that are necessary for the initiation of lagging-strand DNA synthesis from the origin of light-strand DNA replication (OriL). The protein is DNA-directed RNA polymerase, mitochondrial of Mus musculus (Mouse).